The primary structure comprises 143 residues: Large ribosomal subunit protein uL11 (143 aa).

It belongs to the universal ribosomal protein uL11 family. As to quaternary structure, part of the ribosomal stalk of the 50S ribosomal subunit. Interacts with L10 and the large rRNA to form the base of the stalk. L10 forms an elongated spine to which L12 dimers bind in a sequential fashion forming a multimeric L10(L12)X complex. One or more lysine residues are methylated.

In terms of biological role, forms part of the ribosomal stalk which helps the ribosome interact with GTP-bound translation factors. The polypeptide is Large ribosomal subunit protein uL11 (Methylococcus capsulatus (strain ATCC 33009 / NCIMB 11132 / Bath)).